Reading from the N-terminus, the 1033-residue chain is TBC domain-containing protein kinase-like protein (1033 aa).

Disordered regions lie at residues 1–21, 35–55, and 81–101; these read MMKS…YKFK, YDNN…NTVT, and GSIG…TPKP. Composition is skewed to low complexity over residues 36 to 52 and 81 to 97; these read DNNN…DDNN and GSIG…NSVS. The 354-residue stretch at 72–425 folds into the Protein kinase domain; the sequence is NKLTINQNNG…SETLLDHPYF (354 aa). ATP-binding positions include 78–86 and lysine 113; that span reads QNNGSIGGS. Polar residues predominate over residues 535–546; that stretch reads STNSGLNSPQPY. Positions 535–560 are disordered; the sequence is STNSGLNSPQPYQHQHHQHQHQHQHP. The span at 548–558 shows a compositional bias: basic residues; that stretch reads HQHHQHQHQHQ. Residues 657–844 enclose the Rab-GAP TBC domain; the sequence is FVPPILRGDI…ILWDSILLCP (188 aa).

It belongs to the protein kinase superfamily. Ser/Thr protein kinase family.

The sequence is that of TBC domain-containing protein kinase-like protein (tbck) from Dictyostelium discoideum (Social amoeba).